We begin with the raw amino-acid sequence, 727 residues long: E3 SUMO-protein ligase pli1 (727 aa).

The SAP domain occupies 18–52 (ETGLIIPQLKDILRVFGLRLSGTKAELITRIKQLI). In terms of domain architecture, PINIT spans 108–261 (YSRPFAPVVH…SVVVCFVKVY (154 aa)). The SP-RING-type zinc-finger motif lies at 290–371 (QDADIIATST…MQHILESTPS (82 aa)). Zn(2+)-binding residues include Cys321, His323, Cys344, and Cys347. A phosphoserine mark is found at Ser395 and Ser396. 2 disordered regions span residues 408–558 (ELSD…TQHS) and 706–727 (QSNN…QSID). Polar residues-rich tracts occupy residues 417 to 435 (TMAN…THNS) and 459 to 494 (VATS…NRST). Over residues 546–558 (SQQNNNNSNTQHS) the composition is skewed to low complexity.

The protein belongs to the PIAS family. In terms of assembly, interacts with hus5/ubc9.

It is found in the nucleus. It participates in protein modification; protein sumoylation. Acts as an E3 ligase mediating SUMO/Smt3 attachment to other proteins. Involved in the maintenance of the centromere and in telomere length. Regulates recombination, via extension sumoylation, particularly within the heterochromatin repeats. This is E3 SUMO-protein ligase pli1 (pli1) from Schizosaccharomyces pombe (strain 972 / ATCC 24843) (Fission yeast).